We begin with the raw amino-acid sequence, 172 residues long: Caltractin (172 aa).

Residues Met1–Gln23 are disordered. Positions Thr12–Lys21 are enriched in polar residues. 4 consecutive EF-hand domains span residues Glu29–Glu64, Pro65–Glu99, Asp101–Asn136, and Met137–Phe172. 5 residues coordinate Ca(2+): Asp42, Asp44, Ser46, Lys48, and Glu53.

The protein belongs to the centrin family. Monomer.

The protein localises to the cytoplasm. It localises to the cytoskeleton. Its subcellular location is the microtubule organizing center. It is found in the centrosome. Plays a fundamental role in microtubule-organizing center structure and function. The protein is Caltractin (CTN) of Naegleria gruberi (Amoeba).